The sequence spans 181 residues: Translation initiation factor IF-3 (181 aa).

This sequence belongs to the IF-3 family. In terms of assembly, monomer.

The protein localises to the cytoplasm. Its function is as follows. IF-3 binds to the 30S ribosomal subunit and shifts the equilibrium between 70S ribosomes and their 50S and 30S subunits in favor of the free subunits, thus enhancing the availability of 30S subunits on which protein synthesis initiation begins. The chain is Translation initiation factor IF-3 from Pseudoalteromonas translucida (strain TAC 125).